The primary structure comprises 294 residues: Mitochondrial glycine transporter (294 aa).

Solcar repeat units lie at residues 5-84 (RRAT…IRQA), 102-186 (LNMY…MKVL), and 208-292 (ASTL…IVKK). A run of 6 helical transmembrane segments spans residues 11–36 (LIGGFSGGLVSAIILQPFDLLKTRLQ), 59–85 (GALPSCIRTSVGSAMYLTMLNSIRQAI), 108–133 (MFSGAVTRALTGLITMPITVIKVRYE), 161–184 (GFGATALRDAPYAGLYMLFYDRMK), 212–238 (INGSSAFSAAVIATSITAPFDTVKTRM), and 267–285 (GISLRLTRKAFSAGIAWGI).

This sequence belongs to the mitochondrial carrier (TC 2.A.29) family. SLC25A38 subfamily.

The protein localises to the mitochondrion inner membrane. The enzyme catalyses glycine(in) = glycine(out). Functionally, mitochondrial glycine transporter that imports glycine into the mitochondrial matrix. Plays an important role in providing glycine for the first enzymatic step in heme biosynthesis, the condensation of glycine with succinyl-CoA to produce 5-aminolevulinate (ALA) in the mitochondrial matrix. The protein is Mitochondrial glycine transporter of Kluyveromyces lactis (strain ATCC 8585 / CBS 2359 / DSM 70799 / NBRC 1267 / NRRL Y-1140 / WM37) (Yeast).